Reading from the N-terminus, the 413-residue chain is von Willebrand factor A domain-containing protein 1 (413 aa).

The signal sequence occupies residues 1-20 (MLPWTVIGLALSLRLARSGA). A VWFA domain is found at 32-211 (DLLFLLDSSA…ALRGSILDAM (180 aa)). A phosphoserine mark is found at serine 72, serine 78, and serine 91. 2 consecutive Fibronectin type-III domains span residues 212-302 (WPQQ…TLPE) and 305-395 (GPEL…TPEG). The N-linked (GlcNAc...) asparagine glycan is linked to asparagine 262. Residues 385–413 (ALSAKACTPEGERSRAPRPQPQRTGGREP) form a disordered region.

Homodimer or homomultimer; disulfide-linked. Interacts with HSPG2. Post-translationally, N-glycosylated.

The protein resides in the secreted. It is found in the extracellular space. It localises to the extracellular matrix. Its subcellular location is the basement membrane. Its function is as follows. Promotes matrix assembly. Involved in the organization of skeletal muscles and in the formation of neuromuscular junctions. The sequence is that of von Willebrand factor A domain-containing protein 1 (VWA1) from Bos taurus (Bovine).